Here is a 601-residue protein sequence, read N- to C-terminus: Aspartate--tRNA ligase (601 aa).

Glutamate 183 serves as a coordination point for L-aspartate. Positions 207 to 210 (QIFK) are aspartate. Arginine 229 is an L-aspartate binding site. ATP-binding positions include 229-231 (RDE) and glutamine 238. Histidine 457 lines the L-aspartate pocket. Residue glutamate 497 participates in ATP binding. Arginine 504 lines the L-aspartate pocket. 549–552 (GIDR) is an ATP binding site.

It belongs to the class-II aminoacyl-tRNA synthetase family. Type 1 subfamily. As to quaternary structure, homodimer.

It is found in the cytoplasm. The catalysed reaction is tRNA(Asp) + L-aspartate + ATP = L-aspartyl-tRNA(Asp) + AMP + diphosphate. Catalyzes the attachment of L-aspartate to tRNA(Asp) in a two-step reaction: L-aspartate is first activated by ATP to form Asp-AMP and then transferred to the acceptor end of tRNA(Asp). The sequence is that of Aspartate--tRNA ligase from Leptospira interrogans serogroup Icterohaemorrhagiae serovar Lai (strain 56601).